The sequence spans 163 residues: S-fimbrial adhesin protein SfaS (163 aa).

The signal sequence occupies residues 1 to 22 (MKLKAIILATGLINCIAFSAQA). The cysteines at positions 38 and 75 are disulfide-linked. An involved in sialic acid binding region spans residues 138–144 (KARAVSK).

Belongs to the fimbrial protein family.

The protein localises to the fimbrium. Fimbriae (also called pili), polar filaments radiating from the surface of the bacterium to a length of 0.5-1.5 micrometers and numbering 100-300 per cell, enable bacteria to colonize the epithelium of specific host organs. Functionally, a minor fimbrial subunit, this protein is necessary for full expression of S-specific binding. S-fimbrial adhesins enable pathogenic E.coli causing urinary-tract infections or newborn meningitis to attach to glycoproteins terminating with alpha-sialic acid-(2-3)-beta-Gal. This protein binds to the alpha-sialic acid-(2-3)-beta-Gal and is thus responsible for erythrocyte recognition and hemagglutination. The sequence is that of S-fimbrial adhesin protein SfaS (sfaS) from Escherichia coli O6:K15:H31 (strain 536 / UPEC).